A 91-amino-acid polypeptide reads, in one-letter code: RING finger protein Z (91 aa).

Residue Gly2 is the site of N-myristoyl glycine; by host attachment. The RING-type; atypical zinc finger occupies 35–71 (CKCCWFQDKNLVECSDHYLCLKCISSMLKRGKNCEIC). The PTAP/PSAP motif signature appears at 85–88 (PTAP).

The protein belongs to the arenaviridae Z protein family. Interacts with protein NP; this interaction probably directs the encapsidated genome to budding sites. Interacts (via RING domain) with polymerase L; this interaction inhibits viral transcription and replication, Z partially blocks the product exit tunnel for the releasing nascent RNA product. Interacts with the glycoprotein complex; this interaction plays a role in virion budding. Interacts with host eIF4E; this interaction results in eIF4E reduced affinity for its substrate, the 5'-m7 G cap structure. Interacts (via late-budding domain) with host TSG101; this interaction is essential for budding and release of viral particles. Interacts with host RPLP0; this interaction may serve to load ribosome-like particles inside the virion. Interacts with host PML; this interaction induces PML bodies redistribution in the cytoplasm upon viral infection. Post-translationally, myristoylation is required for the role of RING finger protein Z in assembly and budding.

Its subcellular location is the virion. The protein localises to the host cytoplasm. It localises to the host perinuclear region. It is found in the host cell membrane. Functionally, plays a crucial role in virion assembly and budding. Expressed late in the virus life cycle, it acts as an inhibitor of viral transcription and RNA synthesis by interacting with the viral polymerase L. Presumably recruits the NP encapsidated genome to cellular membranes at budding sites via direct interaction with NP. Plays critical roles in the final steps of viral release by interacting with host TSG101, a member of the vacuolar protein-sorting pathway and using other cellular host proteins involved in vesicle formation pathway. The budding of the virus progeny occurs after association of protein Z with the viral glycoprotein complex SSP-GP1-GP2 at the cell periphery, step that requires myristoylation of protein Z. Also selectively represses protein production by associating with host eIF4E. In cell-based minigenome assay, has an inhibitory effect on the ribonucleoprotein machinery (vRNP), which is responsible for the replication and transcription of the viral genome. The sequence is that of RING finger protein Z from Latino mammarenavirus (isolate Rat/Bolivia/MARU 1924/1965) (LATV).